Reading from the N-terminus, the 250-residue chain is Coproheme decarboxylase (250 aa).

Fe-coproporphyrin III-binding positions include Arg-131, 145–149 (YPMNK), His-172, and Gln-185. Residue Tyr-145 is part of the active site.

The protein belongs to the ChdC family. Type 1 subfamily. Fe-coproporphyrin III serves as cofactor.

It carries out the reaction Fe-coproporphyrin III + 2 H2O2 + 2 H(+) = heme b + 2 CO2 + 4 H2O. The catalysed reaction is Fe-coproporphyrin III + H2O2 + H(+) = harderoheme III + CO2 + 2 H2O. It catalyses the reaction harderoheme III + H2O2 + H(+) = heme b + CO2 + 2 H2O. Its pathway is porphyrin-containing compound metabolism; protoheme biosynthesis. Involved in coproporphyrin-dependent heme b biosynthesis. Catalyzes the decarboxylation of Fe-coproporphyrin III (coproheme) to heme b (protoheme IX), the last step of the pathway. The reaction occurs in a stepwise manner with a three-propionate intermediate. This chain is Coproheme decarboxylase, found in Staphylococcus aureus (strain MSSA476).